Consider the following 123-residue polypeptide: Small ribosomal subunit protein uS12c (123 aa).

It belongs to the universal ribosomal protein uS12 family. As to quaternary structure, part of the 30S ribosomal subunit.

Its subcellular location is the plastid. The protein localises to the chloroplast. In terms of biological role, with S4 and S5 plays an important role in translational accuracy. Located at the interface of the 30S and 50S subunits. The chain is Small ribosomal subunit protein uS12c (rps12) from Huperzia lucidula (Shining clubmoss).